The sequence spans 157 residues: Large ribosomal subunit protein uL11 (157 aa).

Disordered regions lie at residues 1-28 (MAGT…GPTP) and 138-157 (NNPR…DILK). Positions 139-157 (NPREFKSRMEDGEYDDILK) are enriched in basic and acidic residues.

It belongs to the universal ribosomal protein uL11 family. As to quaternary structure, part of the ribosomal stalk of the 50S ribosomal subunit. Interacts with L10 and the large rRNA to form the base of the stalk. L10 forms an elongated spine to which L12 dimers bind in a sequential fashion forming a multimeric L10(L12)X complex.

Its function is as follows. Forms part of the ribosomal stalk which helps the ribosome interact with GTP-bound translation factors. In Haloquadratum walsbyi (strain DSM 16790 / HBSQ001), this protein is Large ribosomal subunit protein uL11.